The following is a 442-amino-acid chain: Putative arsenical pump membrane protein (442 aa).

A run of 11 helical transmembrane segments spans residues 22 to 42, 56 to 76, 85 to 105, 107 to 127, 136 to 156, 174 to 194, 250 to 270, 294 to 314, 328 to 347, 378 to 398, and 419 to 439; these read IPATFGALMVLLCGSVSLADL, ILATMIMAIALESFGFFYWVA, GSGIKLFWLTNLLCFLMTIFL, NDGSILITTPILLLVLKYLGL, LLSGVLIATASSAPIGVSNIV, MMFVPSMMGLIFMTCLLFMFF, LFAASYTGISVPLVAVIGSFI, IFIFAFTMYVLIYGLHNIGFT, SLAHATFASGISTSVFSNLF, IIGSDIGSLLLPMGTLATLIW, and IIIIPLTVLFTLTCLYFWISW.

This sequence belongs to the ArsB family.

Its subcellular location is the cell membrane. The chain is Putative arsenical pump membrane protein (ywrK) from Bacillus subtilis (strain 168).